Here is a 175-residue protein sequence, read N- to C-terminus: DELTA-stichotoxin-Hcr4a (175 aa).

The tract at residues 1-10 is plays an important role in the hemolytic activity; sequence ALAGAIIAGA. Residues 9-28 form an N-terminal region region; the sequence is GASLTFQILDKVLAELGQVS. Residues serine 52, valine 85, serine 103, proline 105, tyrosine 131, tyrosine 135, and tyrosine 136 each contribute to the phosphocholine site. Residues 103–118 form a trp-rich region, which is important for the binding to lipid membrane region; it reads SVPFDYNLYSNWWDVK.

The protein belongs to the actinoporin family. Sea anemone subfamily. In terms of assembly, octamer or nonamer in membranes. Monomer in the soluble state.

Its subcellular location is the secreted. The protein localises to the nematocyst. It localises to the target cell membrane. Functionally, pore-forming protein that forms cations-selective hydrophilic pores of around 1 nm and causes cardiac stimulation and cytolysis. Pore formation is a multi-step process that involves specific recognition of membrane sphingomyelin (but neither cholesterol nor phosphatidylcholine) using aromatic rich region and adjacent phosphocholine (POC) binding site, firm binding to the membrane (mainly driven by hydrophobic interactions) accompanied by the transfer of the N-terminal region to the lipid-water interface and finally pore formation after oligomerization of monomers. The polypeptide is DELTA-stichotoxin-Hcr4a (Radianthus crispa (Leathery sea anemone)).